The sequence spans 104 residues: Large ribosomal subunit protein bL21 (104 aa).

It belongs to the bacterial ribosomal protein bL21 family. Part of the 50S ribosomal subunit. Contacts protein L20.

Functionally, this protein binds to 23S rRNA in the presence of protein L20. The polypeptide is Large ribosomal subunit protein bL21 (Helicobacter hepaticus (strain ATCC 51449 / 3B1)).